The primary structure comprises 649 residues: Endoplasmic reticulum membrane protein 65 (649 aa).

The interval Met1–Val55 is disordered. The Cytoplasmic segment spans residues Met1–Thr165. A compositionally biased stretch (basic and acidic residues) spans Asn28–Lys43. Ser94 is modified (phosphoserine). Residues Phe166 to Ile186 form a helical membrane-spanning segment. Topologically, residues Arg187 to Thr302 are lumenal. N-linked (GlcNAc...) asparagine glycosylation is present at Asn215. The chain crosses the membrane as a helical span at residues Phe303–Tyr323. The Cytoplasmic portion of the chain corresponds to Gln324 to Gln366. A helical membrane pass occupies residues Leu367–Leu387. Residues Arg388 to Ala414 are Lumenal-facing. The helical transmembrane segment at Pro415–Ile435 threads the bilayer. Residues Lys436 to Gly479 lie on the Cytoplasmic side of the membrane. The chain crosses the membrane as a helical span at residues Leu480–Phe500. The Lumenal segment spans residues Arg501–Gly557. Residues Ile558–Ala578 form a helical membrane-spanning segment. Residues Ile579–Trp649 are Cytoplasmic-facing.

The protein belongs to the TAPT1 family. As to quaternary structure, interacts with slp1.

It localises to the endoplasmic reticulum membrane. In terms of biological role, may be involved in membrane protein folding. The protein is Endoplasmic reticulum membrane protein 65 of Schizosaccharomyces pombe (strain 972 / ATCC 24843) (Fission yeast).